We begin with the raw amino-acid sequence, 152 residues long: Endoribonuclease YbeY (152 aa).

Residues H113, H117, and H123 each contribute to the Zn(2+) site.

The protein belongs to the endoribonuclease YbeY family. Zn(2+) is required as a cofactor.

The protein localises to the cytoplasm. In terms of biological role, single strand-specific metallo-endoribonuclease involved in late-stage 70S ribosome quality control and in maturation of the 3' terminus of the 16S rRNA. This is Endoribonuclease YbeY from Delftia acidovorans (strain DSM 14801 / SPH-1).